The sequence spans 109 residues: uncharacterized protein (109 aa).

It to A.calcoaceticus putative ferredoxin.

This is an uncharacterized protein from Escherichia coli O157:H7.